The following is a 623-amino-acid chain: 1-deoxy-D-xylulose-5-phosphate synthase (623 aa).

Residues His-80 and Gly-121 to Ser-123 contribute to the thiamine diphosphate site. Asp-152 is a binding site for Mg(2+). Thiamine diphosphate contacts are provided by residues Gly-153–Ala-154, Asn-181, Tyr-289, and Glu-372. Asn-181 is a binding site for Mg(2+).

This sequence belongs to the transketolase family. DXPS subfamily. As to quaternary structure, homodimer. The cofactor is Mg(2+). Requires thiamine diphosphate as cofactor.

The catalysed reaction is D-glyceraldehyde 3-phosphate + pyruvate + H(+) = 1-deoxy-D-xylulose 5-phosphate + CO2. Its pathway is metabolic intermediate biosynthesis; 1-deoxy-D-xylulose 5-phosphate biosynthesis; 1-deoxy-D-xylulose 5-phosphate from D-glyceraldehyde 3-phosphate and pyruvate: step 1/1. Catalyzes the acyloin condensation reaction between C atoms 2 and 3 of pyruvate and glyceraldehyde 3-phosphate to yield 1-deoxy-D-xylulose-5-phosphate (DXP). The polypeptide is 1-deoxy-D-xylulose-5-phosphate synthase (Baumannia cicadellinicola subsp. Homalodisca coagulata).